Here is a 223-residue protein sequence, read N- to C-terminus: Cytotoxic T-lymphocyte protein 4 (223 aa).

Positions 1–35 (MACLGLRRYKAQLQLPSRTWPFVALLTLLFIPVFS) are cleaved as a signal peptide. Residues 36 to 145 (EAIQVTQPSV…PPPYFVGMGN (110 aa)) enclose the Ig-like V-type domain. The Extracellular segment spans residues 36-161 (EAIQVTQPSV…IDPEPCPDSD (126 aa)). The tract at residues 46–50 (VLASS) is homodimerization. Cystine bridges form between C58/C129 and C85/C103. N108 and N113 each carry an N-linked (GlcNAc...) asparagine glycan. Positions 134 to 139 (MYPPPY) are important for interaction with CD80 and CD86. The N-linked (GlcNAc...) asparagine glycan is linked to N145. A homodimerization region spans residues 150 to 155 (YVIDPE). The helical transmembrane segment at 162 to 182 (FLLWILVAVSLGLFFYSFLVS) threads the bilayer. Residues 183–223 (AVSLSKMLKKRSPLTTGVYVKMPPTEPECEKQFQPYFIPIN) are Cytoplasmic-facing. A Phosphotyrosine; by TXK and JAK2 modification is found at Y201.

In terms of assembly, homodimer; disulfide-linked. Binds to CD80/B7-1 and CD86/B7.2. Interacts with ICOSLG. Post-translationally, N-glycosylation is important for dimerization. In terms of processing, phosphorylation at Tyr-201 prevents binding to the AP-2 adapter complex, blocks endocytosis, and leads to retention of CTLA4 on the cell surface. Widely expressed with highest levels in lymphoid tissues.

Its subcellular location is the cell membrane. Its function is as follows. Inhibitory receptor acting as a major negative regulator of T-cell responses. The affinity of CTLA4 for its natural B7 family ligands, CD80 and CD86, is considerably stronger than the affinity of their cognate stimulatory coreceptor CD28. The protein is Cytotoxic T-lymphocyte protein 4 (Ctla4) of Mus musculus (Mouse).